The following is a 363-amino-acid chain: MKALILVGGFGTRLRPLTLTLPKPLVEFGNKPMILHQVEALAAAGVTDIVLAVNYRPEIMVEALKKYEKEYNVNITFSVENEPLGTAGPLALARDILAKDHSPFFVLNSDVICEYPFADLAAFHKAHGAEGTIVVTKVEEPSKYGVVVHYPNSESLIERFVEKPVEFVSNRINGGIYILNPSVLDRIEPRPTSIEKEVFPAMVNDKQLHSFDLEGYWMDVGQPKDYLTGTCLYLSSLRKHKPEILAPASSNIIGNVLIDPSATIGKNCKIGPNVVIGPNVTIGDGVRLQRCAILKSSRVRDHAWVKSSIVGWNSTLGSWSRLENVSVLGDDVVVNDEIYVNGGSILPHKSISANIEVPGTIVM.

This sequence belongs to the transferase hexapeptide repeat family.

The protein localises to the cytoplasm. It carries out the reaction alpha-D-mannose 1-phosphate + GTP + H(+) = GDP-alpha-D-mannose + diphosphate. It participates in nucleotide-sugar biosynthesis; GDP-alpha-D-mannose biosynthesis; GDP-alpha-D-mannose from alpha-D-mannose 1-phosphate (GTP route): step 1/1. Functionally, involved in cell wall synthesis where it is required for glycosylation. Involved in cell cycle progression through cell-size checkpoint. Required for the correct assembly of the septum. This is Mannose-1-phosphate guanyltransferase (mpg1) from Schizosaccharomyces pombe (strain 972 / ATCC 24843) (Fission yeast).